Reading from the N-terminus, the 277-residue chain is Large ribosomal subunit protein uL2 (277 aa).

Disordered stretches follow at residues 37-58 and 222-277; these read LHSK…GGGH and GVAM…NRRR. A compositionally biased stretch (basic residues) spans 268-277; it reads VRRRKQNRRR.

This sequence belongs to the universal ribosomal protein uL2 family. As to quaternary structure, part of the 50S ribosomal subunit. Forms a bridge to the 30S subunit in the 70S ribosome.

In terms of biological role, one of the primary rRNA binding proteins. Required for association of the 30S and 50S subunits to form the 70S ribosome, for tRNA binding and peptide bond formation. It has been suggested to have peptidyltransferase activity; this is somewhat controversial. Makes several contacts with the 16S rRNA in the 70S ribosome. The polypeptide is Large ribosomal subunit protein uL2 (Parafrankia sp. (strain EAN1pec)).